We begin with the raw amino-acid sequence, 593 residues long: Efflux pump FUB11 (593 aa).

Residues 1-45 (MAIDPQPSSPSLSSETIANDTIGNDNNVNEPSVEPKTQEHQHTVP) are disordered. The span at 9–30 (SPSLSSETIANDTIGNDNNVNE) shows a compositional bias: polar residues. Asn-19 carries N-linked (GlcNAc...) asparagine glycosylation. The next 12 membrane-spanning stretches (helical) occupy residues 98 to 118 (WAFVLLQSLACLATTFASSAY), 135 to 155 (VATLGISLYVLGFTFGPLVWA), 167 to 187 (FFFTFMVATAFSAGAAGAGSI), 195 to 215 (FLTGSIGSAPLSNAPALIADM), 227 to 247 (MFSGAPFLGPAIGPIAGGFLG), 254 to 274 (WLHGLMAAFTGVTWIACTVFI), 337 to 357 (IYISIIYGTMYMCFAAFPIVF), 367 to 387 (IGGLAFTGIVIGVILSIISFA), 410 to 430 (LPPAIMGSLLIPIGLFWFAWT), 438 to 458 (IVPIIGTVFFAWGLVLVFMAL), 468 to 488 (IFAASIMAANSALRSLFGAAF), and 503 to 523 (WASSIPAFLALACVPFPFLFY). Residues 570–593 (THNSHASAAHSHGHRRSLSYTRSA) are disordered.

This sequence belongs to the major facilitator superfamily. DHA1 family. Polyamines/proton antiporter (TC 2.A.1.2.16) subfamily.

It is found in the cell membrane. Efflux pump involved in export of fusaric acid, a mycotoxin with low to moderate toxicity to animals and humans, but with high phytotoxic properties. Constitutes a self-protecting mechanism of the fungus against critical levels of FSA within the cell. The sequence is that of Efflux pump FUB11 from Gibberella moniliformis (strain M3125 / FGSC 7600) (Maize ear and stalk rot fungus).